Here is a 183-residue protein sequence, read N- to C-terminus: Translation initiation factor IF-3 (183 aa).

Belongs to the IF-3 family. In terms of assembly, monomer.

The protein resides in the cytoplasm. Functionally, IF-3 binds to the 30S ribosomal subunit and shifts the equilibrium between 70S ribosomes and their 50S and 30S subunits in favor of the free subunits, thus enhancing the availability of 30S subunits on which protein synthesis initiation begins. The chain is Translation initiation factor IF-3 from Yersinia enterocolitica serotype O:8 / biotype 1B (strain NCTC 13174 / 8081).